Reading from the N-terminus, the 228-residue chain is UPF0758 protein CLD_1541 (228 aa).

One can recognise an MPN domain in the interval 106–228 (KINTPLDVSN…YVSMKEKGTI (123 aa)). The Zn(2+) site is built by His177, His179, and Asp190. The JAMM motif motif lies at 177 to 190 (HNHPSGDPTPSKED).

Belongs to the UPF0758 family.

The protein is UPF0758 protein CLD_1541 of Clostridium botulinum (strain Okra / Type B1).